The primary structure comprises 1034 residues: Putative beta-glucuronidase (1034 aa).

Residue Glu-432 is the Proton donor of the active site. In terms of domain architecture, CBM6 spans 909 to 1034 (VDISAEEGVL…GPFIDELFID (126 aa)).

It belongs to the glycosyl hydrolase 2 family.

Its subcellular location is the cytoplasm. It carries out the reaction a beta-D-glucuronoside + H2O = D-glucuronate + an alcohol. Its function is as follows. Glycoside hydrolase that may be involved in ulvan degradation. Ulvan is the main polysaccharide component of the Ulvales (green seaweed) cell wall. It is composed of disaccharide building blocks comprising 3-sulfated rhamnose (Rha3S) linked to D-glucuronic acid (GlcA), L-iduronic acid (IduA), or D-xylose (Xyl). In Formosa agariphila (strain DSM 15362 / KCTC 12365 / LMG 23005 / KMM 3901 / M-2Alg 35-1), this protein is Putative beta-glucuronidase.